The primary structure comprises 385 residues: 1-deoxy-D-xylulose 5-phosphate reductoisomerase (385 aa).

The NADPH site is built by T11, G12, S13, I14, Q39, and N117. K118 serves as a coordination point for 1-deoxy-D-xylulose 5-phosphate. E119 is a binding site for NADPH. D143 serves as a coordination point for Mn(2+). 1-deoxy-D-xylulose 5-phosphate contacts are provided by S144, E145, S170, and H193. E145 serves as a coordination point for Mn(2+). G199 contacts NADPH. 1-deoxy-D-xylulose 5-phosphate is bound by residues S206, N211, K212, and E215. Residue E215 coordinates Mn(2+).

It belongs to the DXR family. It depends on Mg(2+) as a cofactor. The cofactor is Mn(2+).

The catalysed reaction is 2-C-methyl-D-erythritol 4-phosphate + NADP(+) = 1-deoxy-D-xylulose 5-phosphate + NADPH + H(+). The protein operates within isoprenoid biosynthesis; isopentenyl diphosphate biosynthesis via DXP pathway; isopentenyl diphosphate from 1-deoxy-D-xylulose 5-phosphate: step 1/6. In terms of biological role, catalyzes the NADPH-dependent rearrangement and reduction of 1-deoxy-D-xylulose-5-phosphate (DXP) to 2-C-methyl-D-erythritol 4-phosphate (MEP). This is 1-deoxy-D-xylulose 5-phosphate reductoisomerase from Thermomicrobium roseum (strain ATCC 27502 / DSM 5159 / P-2).